The chain runs to 50 residues: MAMKLLECFEFKNTYITKTPIVIVIDNDKIIPNFDRKDGSPLFFKIVNFI.

This is an uncharacterized protein from Dictyostelium discoideum (Social amoeba).